Consider the following 458-residue polypeptide: Vasoactive intestinal polypeptide receptor 1 (458 aa).

Positions 1–31 (MRPLSPPPAGWFCVLAGVLACVLGPVGSWAV) are cleaved as a signal peptide. Over 32–142 (GLQQEECDYL…DEQQTVFYNS (111 aa)) the chain is Extracellular. Intrachain disulfides connect cysteine 38–cysteine 209, cysteine 51–cysteine 73, cysteine 64–cysteine 106, cysteine 87–cysteine 123, and cysteine 216–cysteine 286. 4 N-linked (GlcNAc...) asparagine glycosylation sites follow: asparagine 59, asparagine 70, asparagine 101, and asparagine 105. A helical membrane pass occupies residues 143 to 167 (VKTGYTIGYSLSLAALLVATAILSL). The Cytoplasmic segment spans residues 168–175 (FRKLHCTR). A helical membrane pass occupies residues 176 to 197 (NYIHMHLFISFILRATAVFIKD). Residues 198–217 (LALFDSEESDHCSKGSVGCK) are Extracellular-facing. Residues 218–242 (AAVVLFQYCVMANFFWLLVEGLYLH) traverse the membrane as a helical segment. Residues 243–255 (TLLAVSFFSERKY) are Cytoplasmic-facing. Residues 256 to 277 (FWGYIFVGWGVPSTFIMVWTVV) traverse the membrane as a helical segment. Residues 278–292 (RIHFEDYGCWDTIHS) lie on the Extracellular side of the membrane. The chain crosses the membrane as a helical span at residues 293–317 (SLWWIIKAPILASILVNFILFIRII). Over 318–339 (GILVQKLRPPDVGKSDNSPYSR) the chain is Cytoplasmic. Residues 340–360 (LAKSTLLLIPLFGVHYIMFAF) form a helical membrane-spanning segment. The Extracellular portion of the chain corresponds to 361-368 (FPDNFKAE). A helical membrane pass occupies residues 369-392 (VKMVFELIVGSFQGCVVAILYCFL). Topologically, residues 393-458 (NGEVQAELRR…SSFQAEVSLV (66 aa)) are cytoplasmic.

This sequence belongs to the G-protein coupled receptor 2 family. Interacts with ADCYAP1/PACAP; activated by both PACAP27 and PACAP38 neuropeptides. Interacts with VIP; the interaction results in VIPR1 activation.

It is found in the cell membrane. Its function is as follows. G protein-coupled receptor activated by the neuropeptides vasoactive intestinal peptide (VIP) and pituitary adenylate cyclase-activating polypeptide (ADCYAP1/PACAP). Binds VIP and both PACAP27 and PACAP38 bioactive peptides with the following order of ligand affinity VIP = PACAP27 &gt; PACAP38. Ligand binding causes a conformation change that triggers signaling via guanine nucleotide-binding proteins (G proteins) and modulates the activity of downstream effectors. Activates cAMP-dependent pathway. This chain is Vasoactive intestinal polypeptide receptor 1 (VIPR1), found in Sus scrofa (Pig).